The following is a 206-amino-acid chain: Large ribosomal subunit protein uL4 (206 aa).

It belongs to the universal ribosomal protein uL4 family. In terms of assembly, part of the 50S ribosomal subunit.

In terms of biological role, one of the primary rRNA binding proteins, this protein initially binds near the 5'-end of the 23S rRNA. It is important during the early stages of 50S assembly. It makes multiple contacts with different domains of the 23S rRNA in the assembled 50S subunit and ribosome. Its function is as follows. Forms part of the polypeptide exit tunnel. The polypeptide is Large ribosomal subunit protein uL4 (Paracoccus denitrificans (strain Pd 1222)).